The following is a 755-amino-acid chain: Leucine-rich repeat-containing protein 36 (755 aa).

LRR repeat units lie at residues 51–72 and 73–94; these read SLRSLDLSRNLITSLKGIQYLC and SLQELNLYYNNIPSLVEVSRLQ. Residues 107–146 enclose the LRRCT domain; it reads NPVVRKDTDYRLFAVYTLQTLEKLDDRAVRDSERRAAKLH. Disordered regions lie at residues 354–374 and 448–517; these read GKNYREHSIKPSQDKKATTSH and LPPG…PPIS. A compositionally biased stretch (basic and acidic residues) spans 356–370; it reads NYREHSIKPSQDKKA. A compositionally biased stretch (low complexity) spans 498-510; it reads LSSDLGSLHGLSG. Positions 601-671 form a coiled coil; sequence VESLKQKLVK…ELTQLKRLEE (71 aa). The disordered stretch occupies residues 701-755; the sequence is YSGKSLLPPEKSHPLGRSSPFGKSTLSSSSPMVHDTGQYLIQSVSEADPEPSLWS. The segment covering 721–731 has biased composition (polar residues); that stretch reads FGKSTLSSSSP.

The protein is Leucine-rich repeat-containing protein 36 (Lrrc36) of Mus musculus (Mouse).